Reading from the N-terminus, the 100-residue chain is Large ribosomal subunit protein uL23 (100 aa).

It belongs to the universal ribosomal protein uL23 family. Part of the 50S ribosomal subunit. Contacts protein L29, and trigger factor when it is bound to the ribosome.

One of the early assembly proteins it binds 23S rRNA. One of the proteins that surrounds the polypeptide exit tunnel on the outside of the ribosome. Forms the main docking site for trigger factor binding to the ribosome. This chain is Large ribosomal subunit protein uL23, found in Mycobacterium ulcerans (strain Agy99).